Reading from the N-terminus, the 257-residue chain is Aquaporin TIP4-2 (257 aa).

2 helical membrane passes run 32-52 (LVLT…AGAG) and 63-83 (TLAA…TAGF). Residues 91–93 (NPA) carry the NPA 1 motif. The next 3 helical transmembrane spans lie at 107–127 (LRAL…CILL), 150–170 (GLVM…AMIL), and 178–198 (TIGP…GGNF). An NPA 2 motif is present at residues 204–206 (NPA). A helical transmembrane segment spans residues 225-245 (WIGPLLGGSLAGFVYESLFMV).

This sequence belongs to the MIP/aquaporin (TC 1.A.8) family. TIP (TC 1.A.8.10) subfamily.

It is found in the vacuole membrane. Functionally, aquaporins facilitate the transport of water and small neutral solutes across cell membranes. This is Aquaporin TIP4-2 (TIP4-2) from Zea mays (Maize).